A 369-amino-acid polypeptide reads, in one-letter code: NAD-dependent epimerase/dehydratase FUM13 (369 aa).

Tyrosine 176 is an NADP(+) binding site.

Belongs to the NAD(P)-dependent epimerase/dehydratase family. Dihydroflavonol-4-reductase subfamily.

The protein operates within mycotoxin biosynthesis. NAD-dependent epimerase/dehydratase; part of the gene cluster that mediates the biosynthesis of fumonisins B1 (FB1), B2 (FB2), B3 (FB3), and B4 (FB4), which are carcinogenic mycotoxins. Within the pathway, FUM13 stereospecifically reduces the intermediate 3-keto intermediate 2-amino-3-oxo-12,16-dimethylicosane to the 3-hydroxyl product 2-amino-3-hydroxy-12,16-dimethylicosane. The biosynthesis starts with the FUM1-catalyzed carbon chain assembly from one molecule of acetyl-CoA, eight molecules of malonyl-CoA, and two molecules of methionine (in S-adenosyl form). The C18 polyketide chain is released from the enzyme by a nucleophilic attack of a carbanion, which is derived from R-carbon of alanine by decarboxylation, on the carbonyl carbon of polyketide acyl chain. This step is catalyzed by the pyridoxal 5'-phosphate-dependent aminoacyl transferase FUM8. The resultant 3-keto intermediate is then stereospecifically reduced to a 3-hydroxyl product by reductase FUM13. Subsequent oxidations at C-10 by the cytochrome P450 monooxygenase FUM2, C-14 and C-15 by FUM6, FUM12 or FUM15, tricarballylic esterification of the hydroxyl groups on C-14 and C-15 by acyltransferase FUM14, and C-5 hydroxylation by 2-keto-glutarate-dependent dioxygenase FUM3 furnish the biosynthesis of fumonisins. The tricarballylic moieties are most likely derived from the citric acid cycle, and their addition to the carbon backbone may involve FUM7, FUM10, FUM11 and FUM14. In Gibberella moniliformis (strain M3125 / FGSC 7600) (Maize ear and stalk rot fungus), this protein is NAD-dependent epimerase/dehydratase FUM13.